Reading from the N-terminus, the 319-residue chain is tRNA uridine(34) hydroxylase (319 aa).

Positions 127-221 constitute a Rhodanese domain; sequence KQEDTVIIDA…YGKDPEVQGE (95 aa). The Cysteine persulfide intermediate role is filled by Cys181.

Belongs to the TrhO family.

It catalyses the reaction uridine(34) in tRNA + AH2 + O2 = 5-hydroxyuridine(34) in tRNA + A + H2O. In terms of biological role, catalyzes oxygen-dependent 5-hydroxyuridine (ho5U) modification at position 34 in tRNAs. The chain is tRNA uridine(34) hydroxylase from Bacillus anthracis (strain A0248).